A 360-amino-acid polypeptide reads, in one-letter code: NADH-quinone oxidoreductase subunit H (360 aa).

Helical transmembrane passes span 22 to 42 (ITVGLVVSVIVKIVIILIPLI), 97 to 117 (ALFYIGPIMSLAPSFAAWAVI), 130 to 150 (IGLLYILMITSLSVYGVIIAG), 170 to 190 (ISYEIAMSAALVCVVMVSGSM), 208 to 228 (VFSWNWLPLFPIFIVYLISAV), 255 to 275 (GFAFALFFLAEYIFMILIAAL), 292 to 312 (WGFIGTPSAFWMFVKMAAVLY), and 336 to 356 (VLIPIGFAYIVILGVWMISPL).

Belongs to the complex I subunit 1 family. In terms of assembly, NDH-1 is composed of 14 different subunits. Subunits NuoA, H, J, K, L, M, N constitute the membrane sector of the complex.

The protein localises to the cell inner membrane. The enzyme catalyses a quinone + NADH + 5 H(+)(in) = a quinol + NAD(+) + 4 H(+)(out). In terms of biological role, NDH-1 shuttles electrons from NADH, via FMN and iron-sulfur (Fe-S) centers, to quinones in the respiratory chain. The immediate electron acceptor for the enzyme in this species is believed to be ubiquinone. Couples the redox reaction to proton translocation (for every two electrons transferred, four hydrogen ions are translocated across the cytoplasmic membrane), and thus conserves the redox energy in a proton gradient. This subunit may bind ubiquinone. The chain is NADH-quinone oxidoreductase subunit H from Neisseria meningitidis serogroup C / serotype 2a (strain ATCC 700532 / DSM 15464 / FAM18).